Reading from the N-terminus, the 304-residue chain is UDP-3-O-acyl-N-acetylglucosamine deacetylase (304 aa).

Residues His-77, His-233, and Asp-237 each contribute to the Zn(2+) site. His-260 (proton donor) is an active-site residue.

Belongs to the LpxC family. Requires Zn(2+) as cofactor.

The catalysed reaction is a UDP-3-O-[(3R)-3-hydroxyacyl]-N-acetyl-alpha-D-glucosamine + H2O = a UDP-3-O-[(3R)-3-hydroxyacyl]-alpha-D-glucosamine + acetate. It functions in the pathway glycolipid biosynthesis; lipid IV(A) biosynthesis; lipid IV(A) from (3R)-3-hydroxytetradecanoyl-[acyl-carrier-protein] and UDP-N-acetyl-alpha-D-glucosamine: step 2/6. Its function is as follows. Catalyzes the hydrolysis of UDP-3-O-myristoyl-N-acetylglucosamine to form UDP-3-O-myristoylglucosamine and acetate, the committed step in lipid A biosynthesis. This chain is UDP-3-O-acyl-N-acetylglucosamine deacetylase, found in Lawsonia intracellularis (strain PHE/MN1-00).